We begin with the raw amino-acid sequence, 71 residues long: Small ribosomal subunit protein eS31 (71 aa).

Positions 35, 38, 53, and 56 each coordinate Zn(2+). The C4-type zinc-finger motif lies at 35–56 (CPKCGAGVFMAEHLNRYACGKC).

It belongs to the eukaryotic ribosomal protein eS31 family. As to quaternary structure, part of the 30S ribosomal subunit. The cofactor is Zn(2+).

The protein is Small ribosomal subunit protein eS31 of Methanococcus vannielii (strain ATCC 35089 / DSM 1224 / JCM 13029 / OCM 148 / SB).